Consider the following 560-residue polypeptide: Nucleoprotein (560 aa).

Residues 53 to 236 form a binding site for the cap structure m7GTP region; the sequence is MRKDKRTDTD…ITQEQSQINV (184 aa). Positions 333-353 are disordered; it reads LTDTGSPNHPPVRNGGSPRLS. D379 and E381 together coordinate Mn(2+). The Zn(2+) site is built by E389, C496, H499, and C520. D524 contributes to the Mn(2+) binding site.

Belongs to the arenaviridae nucleocapsid protein family. Homomultimerizes to form the nucleocapsid. Binds to viral genomic RNA. Interacts with glycoprotein G2. Interacts with protein Z; this interaction probably directs the encapsidated genome to budding sites. Interacts with protein L; this interaction does not interfere with Z-L interaction. Interacts with host IKBKE (via Protein kinase domain); the interaction inhibits IKBKE kinase activity.

It localises to the virion. Its subcellular location is the host cytoplasm. Functionally, encapsidates the genome, protecting it from nucleases. The encapsidated genomic RNA is termed the nucleocapsid (NC). Serves as template for viral transcription and replication. The increased presence of protein N in host cell does not seem to trigger the switch from transcription to replication as observed in other negative strain RNA viruses. Through the interaction with host IKBKE, strongly inhibits the phosphorylation and nuclear translocation of host IRF3, a protein involved in interferon activation pathway, leading to the inhibition of interferon-beta and IRF3-dependent promoters activation. Also encodes a functional 3'-5' exoribonuclease that degrades preferentially dsRNA substrates and thereby participates in the suppression of interferon induction. The sequence is that of Nucleoprotein from Pirital mammarenavirus (isolate Rat/Venezuela/VAV-488/1995) (PIRV).